The chain runs to 93 residues: Putative pterin-4-alpha-carbinolamine dehydratase (93 aa).

The protein belongs to the pterin-4-alpha-carbinolamine dehydratase family.

It catalyses the reaction (4aS,6R)-4a-hydroxy-L-erythro-5,6,7,8-tetrahydrobiopterin = (6R)-L-erythro-6,7-dihydrobiopterin + H2O. The protein is Putative pterin-4-alpha-carbinolamine dehydratase of Trichormus variabilis (strain ATCC 29413 / PCC 7937) (Anabaena variabilis).